The sequence spans 475 residues: Ammonium transporter 2 (475 aa).

Helical transmembrane passes span 27–47 (AATL…ASIV), 55–75 (SAFM…LLCY), 120–140 (LVYF…GSVL), 148–168 (WMAF…YSIW), 183–203 (GGYV…YWVG), 218–238 (VLLM…FNGG), 254–274 (TNLS…IFFG), 279–299 (IGAI…AGLI), 302–322 (WAAI…MMII), 336–356 (LAVF…TGLF), and 389–409 (AGAA…LLAI).

Belongs to the ammonia transporter channel (TC 1.A.11.2) family. Higher expression in shoots than roots.

The protein resides in the cell membrane. Its function is as follows. High affinity ammonium transporter that may play an important role in moving ammonium between the apoplast and symplast of cells throughout the plant. Does not transport methylammonium. In Arabidopsis thaliana (Mouse-ear cress), this protein is Ammonium transporter 2 (AMT2).